Here is a 385-residue protein sequence, read N- to C-terminus: Interleukin-13 receptor subunit alpha-2 (385 aa).

The first 23 residues, 1–23 (MALMAVNTRCLCLFLLCTITGHS), serve as a signal peptide directing secretion. Residues 24–336 (LEIKVNPPQD…WEGYTGPDSK (313 aa)) lie on the Extracellular side of the membrane. 3 consecutive Fibronectin type-III domains span residues 30–130 (PPQD…ADEG), 133–221 (GTKI…PIRS), and 236–334 (PPEF…TGPD). Cysteines 61 and 109 form a disulfide. Residue N111 is glycosylated (N-linked (GlcNAc...) asparagine). The cysteines at positions 141 and 151 are disulfide-linked. N164 is a glycosylation site (N-linked (GlcNAc...) asparagine). The cysteines at positions 180 and 193 are disulfide-linked. N211 and N295 each carry an N-linked (GlcNAc...) asparagine glycan. C265 and C312 form a disulfide bridge. A WSXWS motif motif is present at residues 318 to 322 (WSEWS). A helical transmembrane segment spans residues 337-357 (IVFIVPVCLFFIFLLLLLCLI). Residues 358 to 385 (VEKEDPEPTLSLHVDLNKEMYAYEETLC) lie on the Cytoplasmic side of the membrane.

The protein belongs to the type I cytokine receptor family. Type 5 subfamily. As to quaternary structure, interacts with IL4RA. Interacts with high affinity to interleukin-13 (IL13), but not to interleukin-4 (IL4). Cleaved by MMP8 leading to a soluble form that is also able to interact with IL13.

The protein resides in the cell membrane. Its function is as follows. Cell surface receptor that plays a role in the regulation of IL-13-mediated responses. Functions as a decoy receptor that inhibits IL-13- and IL-4-mediated signal transduction via the JAK-STAT pathway and thereby modulates immune responses and inflammation. Serves as a functional signaling receptor for IL-13 in an alternative pathway involving AP-1 ultimately leading to the production of TGFB1. The polypeptide is Interleukin-13 receptor subunit alpha-2 (Il13ra2) (Rattus norvegicus (Rat)).